Here is a 343-residue protein sequence, read N- to C-terminus: Phospholipid phosphatase-related protein type 2 (343 aa).

Transmembrane regions (helical) follow at residues 12–32 (FSII…VVLL), 72–92 (ALIY…GELA), and 129–149 (FLGV…AGQV). N-linked (GlcNAc...) asparagine glycosylation occurs at Asn-165. A run of 3 helical transmembrane segments spans residues 210–230 (AALC…VFRV), 239–259 (SLCL…VAEY), and 266–286 (VLAG…CVVH). The interval 291-343 (RPHSGRRLSPWEDLSQAPTMDSPLEKNPRPAGRIRHRHGSPHPSRRTVPAVAT) is disordered. A phosphoserine mark is found at Ser-299 and Ser-312. The span at 322 to 335 (GRIRHRHGSPHPSR) shows a compositional bias: basic residues.

The protein belongs to the PA-phosphatase related phosphoesterase family.

It localises to the membrane. The sequence is that of Phospholipid phosphatase-related protein type 2 from Mus musculus (Mouse).